Here is a 203-residue protein sequence, read N- to C-terminus: Pectinesterase inhibitor 12 (203 aa).

The N-terminal stretch at 1 to 26 (MRMSKALAAVVAISVSLSAAAMGVDA) is a signal peptide. Cystine bridges form between cysteine 32–cysteine 47 and cysteine 100–cysteine 140.

It belongs to the PMEI family.

The protein resides in the secreted. It localises to the extracellular space. Its subcellular location is the apoplast. Functionally, pectin methylesterase (PME) inhibitor that inhibits PME in vitro. The polypeptide is Pectinesterase inhibitor 12 (Oryza sativa subsp. japonica (Rice)).